The following is a 328-amino-acid chain: MNDQWYKHLIGARTIKTGIAIFLTAVFCMALDLTPIYAILTAVVTIEPTAKASLIKGYRRLPATVIGAGFAVLFTYLFGDQSPFTYALSATFTILFCTKLKLQVGTNVAVLTSLAMIPGIHDAYIFNFLSRTLTAIIGLVTSGLINFMVFPPKYYGQVEEKLSKTDALMYKLFYNRCQELILSRLQSDKSEKAYKNIFNLNNQVETLISYQRDELSYHKKKECDWKLLNQLTKRAYTNRLFITHLSNIIYLPKNTRVNFSGDEKMALLKISSSIKDIFYDGTFKREDDSVETLRSTIKALEISGENQIKSHILYEVLMIYRLLDSRYA.

Transmembrane regions (helical) follow at residues 19 to 39 (IAIFLTAVFCMALDLTPIYAI), 61 to 81 (LPATVIGAGFAVLFTYLFGDQ), 108 to 128 (VAVLTSLAMIPGIHDAYIFNF), and 132 to 152 (TLTAIIGLVTSGLINFMVFPP).

The protein belongs to the UPF0421 family.

Its subcellular location is the cell membrane. In Staphylococcus aureus (strain Mu50 / ATCC 700699), this protein is UPF0421 protein SAV1889.